The chain runs to 209 residues: Aspartate kinase-like protein lolA1 (209 aa).

Positions 1 to 11 (MLDESPMRKGD) are enriched in basic and acidic residues. Residues 1–27 (MLDESPMRKGDSVSNDQSNPESNASVS) are disordered. Over residues 12-27 (SVSNDQSNPESNASVS) the composition is skewed to polar residues.

This sequence belongs to the aspartokinase family.

It participates in alkaloid biosynthesis. Functionally, aspartokinase-like protein; part of the gene cluster that mediates the biosynthesis of loline alkaloids, potent insecticidal agents composed of a pyrrolizidine ring system and an uncommon ether bridge linking carbons 2 and 7. Lolines are structurally differentiated by the various modifications of the L-amino group and include norloline, loline, N-methylloline, N-acetylloline, N-acetylnorloline, and N-formylloline. The first committed step is the condensation of O-acetyl-L-homoserine (derived from L-aspartic acid) and L-proline, probably catalyzed by the gamma-type pyridoxal 5'-phosphate(PLP)-dependent enzyme lolC, to give the diamino diacid, NACPP. Ensuing cyclization, decarboxylation, and acetylation steps yield 1-exo-acetamidopyrrolizidine (AcAP). LolO is required for installation of the ether bridge upon the pathway intermediate, 1-exo-acetamidopyrrolizidine (AcAP). In sequential 2-oxoglutarate- and O(2)-consuming steps, lolO removes hydrogens from C2 and C7 of AcAP to form both carbon-oxygen bonds in N-acetylnorloline (NANL), the precursor to all other lolines. The enzymes lolD, lolE, lolF and lolT have also been proposed to be involved in the ether-bridge installation. Further processing of the exocyclic moiety of NANL by fungal N-acetamidase (LolN), methyltransferase (LolM), and cytochrome P450 (LolP) enzymes, with occasional involvement of a plant acetyltransferase, generates the other known lolines. LolN transforms NANL to norlonine which is monomethylated and dimethylated to respectively lonine and N-methyllonine (NML) by lolM. LolP catalyzes hydroxylation of the methyl group in N-methylloline (NML) and further oxygenation to N-formylloline (NFL). A plant acetyltransferase is responsible for the acetylation of loline to form N-acetylloline (NAL). LolA might interact with aspartate kinase to prevent feedback inhibition of its activity by these end products and thereby promote production of L-homoserine from L-aspartate. In Epichloe uncinata (Endophyte fungus), this protein is Aspartate kinase-like protein lolA1.